The chain runs to 291 residues: Porphobilinogen deaminase (291 aa).

At Cys233 the chain carries S-(dipyrrolylmethanemethyl)cysteine.

The protein belongs to the HMBS family. In terms of assembly, monomer. The cofactor is dipyrromethane.

The catalysed reaction is 4 porphobilinogen + H2O = hydroxymethylbilane + 4 NH4(+). It functions in the pathway porphyrin-containing compound metabolism; protoporphyrin-IX biosynthesis; coproporphyrinogen-III from 5-aminolevulinate: step 2/4. Its function is as follows. Tetrapolymerization of the monopyrrole PBG into the hydroxymethylbilane pre-uroporphyrinogen in several discrete steps. The protein is Porphobilinogen deaminase (hemC) of Ruminiclostridium josui (Clostridium josui).